Consider the following 211-residue polypeptide: Ribosomal RNA small subunit methyltransferase G (211 aa).

Residues Gly74, Leu79, 125–126, and Arg140 contribute to the S-adenosyl-L-methionine site; that span reads AE.

It belongs to the methyltransferase superfamily. RNA methyltransferase RsmG family.

The protein resides in the cytoplasm. Its function is as follows. Specifically methylates the N7 position of guanine in position 518 of 16S rRNA. The chain is Ribosomal RNA small subunit methyltransferase G from Clavibacter sepedonicus (Clavibacter michiganensis subsp. sepedonicus).